A 250-amino-acid chain; its full sequence is MSDETSNTTHFGFRTVPEGEKAGMVHGVFTRVASKYDIMNDLMSGGVHRLWKDAMMDWLAPRPGQKLLDVAGGTGDISFRFLKRAPGAEATVCDMTESMLVEGRQRADAAQMADRLDWVVGDAMALPFASNTFDVYTISFGIRNVTRVQDALNEAYRVLKPGGRLMVLEFSQLPNPMMQWAYDRYSFNVIPVMGQIVANDRDSYQYLVESIRKFPDQETFADMIRKAGFGLVKYRNLSLGIAALHSGWKI.

S-adenosyl-L-methionine contacts are provided by residues threonine 74, aspartate 94, 122 to 123 (DA), and serine 139.

Belongs to the class I-like SAM-binding methyltransferase superfamily. MenG/UbiE family.

It catalyses the reaction a 2-demethylmenaquinol + S-adenosyl-L-methionine = a menaquinol + S-adenosyl-L-homocysteine + H(+). The enzyme catalyses a 2-methoxy-6-(all-trans-polyprenyl)benzene-1,4-diol + S-adenosyl-L-methionine = a 5-methoxy-2-methyl-3-(all-trans-polyprenyl)benzene-1,4-diol + S-adenosyl-L-homocysteine + H(+). Its pathway is quinol/quinone metabolism; menaquinone biosynthesis; menaquinol from 1,4-dihydroxy-2-naphthoate: step 2/2. The protein operates within cofactor biosynthesis; ubiquinone biosynthesis. In terms of biological role, methyltransferase required for the conversion of demethylmenaquinol (DMKH2) to menaquinol (MKH2) and the conversion of 2-polyprenyl-6-methoxy-1,4-benzoquinol (DDMQH2) to 2-polyprenyl-3-methyl-6-methoxy-1,4-benzoquinol (DMQH2). This Cereibacter sphaeroides (strain ATCC 17029 / ATH 2.4.9) (Rhodobacter sphaeroides) protein is Ubiquinone/menaquinone biosynthesis C-methyltransferase UbiE.